Here is a 219-residue protein sequence, read N- to C-terminus: Ribose-5-phosphate isomerase A (219 aa).

Substrate is bound by residues 28 to 31 (TGST), 81 to 84 (DGAD), and 94 to 97 (KGGG). Catalysis depends on Glu103, which acts as the Proton acceptor. Lys121 provides a ligand contact to substrate.

The protein belongs to the ribose 5-phosphate isomerase family. Homodimer.

It carries out the reaction aldehydo-D-ribose 5-phosphate = D-ribulose 5-phosphate. It participates in carbohydrate degradation; pentose phosphate pathway; D-ribose 5-phosphate from D-ribulose 5-phosphate (non-oxidative stage): step 1/1. Catalyzes the reversible conversion of ribose-5-phosphate to ribulose 5-phosphate. This chain is Ribose-5-phosphate isomerase A, found in Salmonella arizonae (strain ATCC BAA-731 / CDC346-86 / RSK2980).